The following is a 377-amino-acid chain: UDP-N-acetylglucosamine 2-epimerase (377 aa).

His-212 is an active-site residue.

Belongs to the UDP-N-acetylglucosamine 2-epimerase family. In terms of assembly, homodimer.

The enzyme catalyses UDP-N-acetyl-alpha-D-glucosamine + H2O = aldehydo-N-acetyl-D-mannosamine + UDP + H(+). Catalyzes the conversion of UDP-N-acetylglucosamine (UDP-GlcNAc) to UDP and N-acetyl-D-mannosamine (ManNAc). This is UDP-N-acetylglucosamine 2-epimerase (siaA) from Neisseria meningitidis serogroup B (strain ATCC BAA-335 / MC58).